The sequence spans 420 residues: Glutaryl-CoA dehydrogenase, mitochondrial (420 aa).

A substrate-binding site is contributed by 125–126; sequence RS. Residues 164–167, serine 173, and 198–200 each bind FAD; these read FGLT and WIT. Residue serine 173 coordinates substrate. Residues 273–277 and arginine 280 each bind substrate; that span reads FSCLN. The active-site Proton acceptor is glutamate 400. Threonine 402 and phenylalanine 420 together coordinate FAD.

This sequence belongs to the acyl-CoA dehydrogenase family. The cofactor is FAD.

Its subcellular location is the mitochondrion matrix. The enzyme catalyses glutaryl-CoA + oxidized [electron-transfer flavoprotein] + 2 H(+) = (2E)-butenoyl-CoA + reduced [electron-transfer flavoprotein] + CO2. Its pathway is amino-acid metabolism; lysine degradation. The protein operates within amino-acid metabolism; tryptophan metabolism. This is Glutaryl-CoA dehydrogenase, mitochondrial (gcdh) from Dictyostelium discoideum (Social amoeba).